Consider the following 706-residue polypeptide: MFNIVKKEIQWGEETLTLETGRVARQADGSVIATLGETSVMANVTFAKSPKPGMDFFPLTVHYQEKYYAAGKVPGGFFKREARPTEKETLTARLIDRPIRPLFVPGFKNETLVMCTVLSHDLVNDPDMVAMIAASAALTISGAPFRGPIAGCRVGFEDGEYILNPEIDDMHDLRNNPEQRLDLVVAGTKDAVMMVESEAYELTEAEMLGAVKFAHDSIQPVIDLIIDLAEDAAKEPFDFQAPDYSELFEAVKAAGEDKMREAYAITDKLERQAAVSAVKEGVKEGLSEEQLEDPNLSAALKKLESTVLRSDVVKNGRRIDGRALDEVRDIVSETKVLPRTHGSALFTRGETQGLVVTTLGTGDDEQFIDALHGNFKSNFLLHYNFPPYSVGEAGRVGPPGRREIGHGKLAWRALQAVLPAATDFPYTVRVVSEITESNGSSSMASVCGGSLSMMDAGVPLKAPVAGVAMGLVLEDDGSYGILTDILGDEDHLGDMDFKVAGTEAGITSLQMDIKVAGITQEIMEKALEQAKAGRLHILAEMAKAVTEAGEFSEHAPRIETMQIPTDKIREVIGSGGKVIREIVEVSGAKVDINDEGIIKIASPNGDSIQKAYDMIHSIVAEPEEGKIYKGKVVKIVDFGAFVNFFGKRDGLVHVSQIKNERLNHPSDVLSEGQEVWVKLLGFDDRGKVRLAMKMVNQETGEEGAAE.

Residues Asp-490 and Asp-496 each contribute to the Mg(2+) site. The 60-residue stretch at 556–615 (PRIETMQIPTDKIREVIGSGGKVIREIVEVSGAKVDINDEGIIKIASPNGDSIQKAYDMI) folds into the KH domain. The region spanning 625-693 (GKIYKGKVVK…DRGKVRLAMK (69 aa)) is the S1 motif domain.

The protein belongs to the polyribonucleotide nucleotidyltransferase family. Mg(2+) serves as cofactor.

The protein resides in the cytoplasm. The catalysed reaction is RNA(n+1) + phosphate = RNA(n) + a ribonucleoside 5'-diphosphate. In terms of biological role, involved in mRNA degradation. Catalyzes the phosphorolysis of single-stranded polyribonucleotides processively in the 3'- to 5'-direction. The chain is Polyribonucleotide nucleotidyltransferase from Jannaschia sp. (strain CCS1).